A 156-amino-acid polypeptide reads, in one-letter code: 6,7-dimethyl-8-ribityllumazine synthase (156 aa).

Residues phenylalanine 22, 56 to 58 (AFE), and 80 to 82 (VVI) each bind 5-amino-6-(D-ribitylamino)uracil. (2S)-2-hydroxy-3-oxobutyl phosphate is bound at residue 85 to 86 (ST). The active-site Proton donor is histidine 88. 5-amino-6-(D-ribitylamino)uracil is bound at residue phenylalanine 113. Arginine 127 serves as a coordination point for (2S)-2-hydroxy-3-oxobutyl phosphate.

This sequence belongs to the DMRL synthase family.

The catalysed reaction is (2S)-2-hydroxy-3-oxobutyl phosphate + 5-amino-6-(D-ribitylamino)uracil = 6,7-dimethyl-8-(1-D-ribityl)lumazine + phosphate + 2 H2O + H(+). The protein operates within cofactor biosynthesis; riboflavin biosynthesis; riboflavin from 2-hydroxy-3-oxobutyl phosphate and 5-amino-6-(D-ribitylamino)uracil: step 1/2. Catalyzes the formation of 6,7-dimethyl-8-ribityllumazine by condensation of 5-amino-6-(D-ribitylamino)uracil with 3,4-dihydroxy-2-butanone 4-phosphate. This is the penultimate step in the biosynthesis of riboflavin. The chain is 6,7-dimethyl-8-ribityllumazine synthase from Streptococcus agalactiae serotype Ia (strain ATCC 27591 / A909 / CDC SS700).